A 338-amino-acid chain; its full sequence is Protein WVD2-like 2 (338 aa).

A compositionally biased stretch (basic and acidic residues) spans 1-14 (MGRELVDKHMDKKA). The segment at 1–150 (MGRELVDKHM…SFSVASSSAT (150 aa)) is disordered. 2 stretches are compositionally biased toward polar residues: residues 15–37 (NSLT…STNE) and 59–69 (QGITETPGSHK). The segment covering 100–115 (NNSLGNGASHNSSSAS) has biased composition (low complexity). A compositionally biased stretch (basic and acidic residues) spans 128-138 (RIPDHKMHHDE). Positions 177–214 (REFYQKLEEKQKALEAEKRENEKRLKEEQEAVTKQLRK) form a coiled coil. Positions 222–338 (PVPSFYQEGP…GENGVGVVEE (117 aa)) are disordered. The span at 288 to 300 (TNSVPRTPNSSSK) shows a compositional bias: polar residues.

This sequence belongs to the TPX2 family. Expressed in seedlings.

The protein resides in the cytoplasm. It is found in the cytoskeleton. Its function is as follows. Microtubule-associated protein (MAP) that regulates the orientation of interphase cortical microtubules. This Arabidopsis thaliana (Mouse-ear cress) protein is Protein WVD2-like 2.